Reading from the N-terminus, the 490-residue chain is GTPase Der (490 aa).

EngA-type G domains lie at 3–166 (PVVA…AEAM) and 200–373 (IKLA…DSAT). Residues 9-16 (GRPNVGKS), 56-60 (DTGGI), 118-121 (NKVD), 206-213 (GKPNVGKS), 253-257 (DTAGV), and 318-321 (NKWD) each bind GTP. Residues 374–458 (RRVSTSMLTR…PIQIRFQDGG (85 aa)) form the KH-like domain.

The protein belongs to the TRAFAC class TrmE-Era-EngA-EngB-Septin-like GTPase superfamily. EngA (Der) GTPase family. As to quaternary structure, associates with the 50S ribosomal subunit.

GTPase that plays an essential role in the late steps of ribosome biogenesis. In Shewanella piezotolerans (strain WP3 / JCM 13877), this protein is GTPase Der.